Consider the following 622-residue polypeptide: Serine/threonine-protein kinase PknB (622 aa).

At 1-328 the chain is on the cytoplasmic side; the sequence is MTTPPHLSDR…TESDGSIGRW (328 aa). The Protein kinase domain occupies 11-273; the sequence is YELGDILGFG…TAAEMRADLI (263 aa). ATP-binding positions include 17–25, K40, and 93–95; these read LGFGGMSEV and EYV. D138 functions as the Proton acceptor in the catalytic mechanism. Residues 140-143 and D156 contribute to the ATP site; that span reads KPAN. N143 and D156 together coordinate Mg(2+). S166 and S168 each carry phosphoserine; by autocatalysis. Phosphothreonine; by autocatalysis occurs at positions 170, 172, and 308. The helical transmembrane segment at 329 to 349 threads the bilayer; sequence VAVVAVLAVLTIAIVAAFNTF. The Extracellular portion of the chain corresponds to 350-622; it reads GGNTRDVQVP…DGIITLKFGQ (273 aa). 4 consecutive PASTA domains span residues 352–418, 419–486, 487–553, and 554–622; these read NTRD…NVST, GPEQ…IVGS, GPET…QVSK, and GNQF…KFGQ. Residues 381–404 are disordered; the sequence is RTLQKPDSTIPPDHVISTEPGANA.

Belongs to the protein kinase superfamily. Ser/Thr protein kinase family. As to quaternary structure, homodimer. Autophosphorylated. Dephosphorylated by PstP.

The protein localises to the cell membrane. The catalysed reaction is L-seryl-[protein] + ATP = O-phospho-L-seryl-[protein] + ADP + H(+). It catalyses the reaction L-threonyl-[protein] + ATP = O-phospho-L-threonyl-[protein] + ADP + H(+). Protein kinase that regulates many aspects of mycobacterial physiology. Is a key component of a signal transduction pathway that regulates cell growth, cell shape and cell division via phosphorylation of target proteins. The polypeptide is Serine/threonine-protein kinase PknB (pknB) (Mycobacterium leprae (strain TN)).